Here is a 241-residue protein sequence, read N- to C-terminus: Zinc finger CCHC domain-containing protein 17 (241 aa).

The S1 motif domain occupies 16-88; sequence YTIFQGEVAM…DRIKVSLSMK (73 aa). S114 is subject to Phosphoserine. The segment at 131 to 148 adopts a CCHC-type zinc-finger fold; it reads TTCKKCGCKGHFAKDCFM. K144 is modified (N6-acetyllysine). A disordered region spans residues 160-241; the sequence is EEEEEKEEAK…KKKHKKKHKE (82 aa). Residues 166–178 show a composition bias toward basic and acidic residues; that stretch reads EEAKAEGLEKPDP. Positions 182–198 are enriched in basic residues; sequence SSRKRKKEKKKKKHRDR. A Phosphoserine modification is found at S183. The segment covering 211–225 has biased composition (basic and acidic residues); that stretch reads DTGKKARHSSKDSKA. The span at 226 to 241 shows a compositional bias: basic residues; it reads TKKKKKKKKHKKKHKE.

Interacts with PNN. Associates with the 60S ribosomal subunit. Expressed in liver, brain, heart, kidney testis, stomach, small intestine, skin, thymus, uterus, placenta, spleen, lung and skeletal muscle.

It localises to the nucleus. It is found in the nucleolus. This is Zinc finger CCHC domain-containing protein 17 (Zcchc17) from Mus musculus (Mouse).